A 374-amino-acid polypeptide reads, in one-letter code: Tomoregulin-2 (374 aa).

The N-terminal stretch at 1–40 (MVLWESPRQCSSWTLCEGFCWLLLLPVTLLIIARPVKLAA) is a signal peptide. Topologically, residues 41–320 (FPTSLSDCQT…VPGPVRFQYV (280 aa)) are extracellular. N-linked (GlcNAc...) asparagine glycosylation is present at Asn55. Kazal-like domains lie at 90–137 (VCQF…SCAT) and 181–229 (VCNI…RCQD). 6 cysteine pairs are disulfide-bonded: Cys91-Cys121, Cys95-Cys114, Cys103-Cys135, Cys182-Cys213, Cys186-Cys206, and Cys195-Cys227. Asn230 is a glycosylation site (N-linked (GlcNAc...) asparagine). The region spanning 261–301 (HHIPCPEHYNGFCMHGKCEHSINMQEPSCRCDAGYTGQHCE) is the EGF-like domain. 3 cysteine pairs are disulfide-bonded: Cys265–Cys278, Cys273–Cys289, and Cys291–Cys300. The segment at 303 to 320 (KDYSVLYVVPGPVRFQYV) is required for shedding. Residues 321 to 341 (LIAAVIGTIQIAVICVVVLCI) form a helical membrane-spanning segment. Topologically, residues 342–374 (TRKCPRSNRIHRQKQNTGHYSSDNTTRASTRLI) are cytoplasmic. Residues 353 to 374 (RQKQNTGHYSSDNTTRASTRLI) are disordered. Over residues 356–374 (QNTGHYSSDNTTRASTRLI) the composition is skewed to polar residues.

The protein belongs to the tomoregulin family. O-glycosylated; contains chondroitin sulfate glycosaminoglycans. In terms of processing, a soluble form (TMEFF2-ECD) is produced by proteolytic shedding. This shedding can be induced by phorbol ester or pro-inflammatory cytokines such as TNFalpha, and is mediated by a metalloproteinase ADAM. In terms of tissue distribution, widely expressed in the brain. In the olfactory bulb expressed in mitral cell, granule, and glomerular layers. In the hippocampus expressed in hippocampal cornu ammonis, pyramidal layer, dentate gyrus, and substantia nigra pars compacta.

The protein resides in the membrane. Its function is as follows. May be a survival factor for hippocampal and mesencephalic neurons. The shedded form may up-regulate cell proliferation. In Mus musculus (Mouse), this protein is Tomoregulin-2 (Tmeff2).